The chain runs to 563 residues: GTPase Obg (563 aa).

The Obg domain occupies 2–168 (SDFVDRVTVH…RDVILELKSI (167 aa)). Residues 169-349 (ADVALVGFPS…LNWALADLVT (181 aa)) form the OBG-type G domain. Residues 175–182 (GFPSAGKS), 200–204 (FTTLV), 221–224 (DVPG), 301–304 (NKVD), and 330–332 (STA) each bind GTP. 2 residues coordinate Mg(2+): S182 and T202. Residues 383–469 (DEGGNALDFT…DRAVEFDWDP (87 aa)) enclose the OCT domain. The segment at 525-563 (MMAERKAGHWADPSVDDDRHDETSLFGRGETADDEDVEQ) is disordered.

It belongs to the TRAFAC class OBG-HflX-like GTPase superfamily. OBG GTPase family. In terms of assembly, monomer. Requires Mg(2+) as cofactor.

The protein localises to the cytoplasm. Functionally, an essential GTPase which binds GTP, GDP and possibly (p)ppGpp with moderate affinity, with high nucleotide exchange rates and a fairly low GTP hydrolysis rate. Plays a role in control of the cell cycle, stress response, ribosome biogenesis and in those bacteria that undergo differentiation, in morphogenesis control. The polypeptide is GTPase Obg (Bifidobacterium adolescentis (strain ATCC 15703 / DSM 20083 / NCTC 11814 / E194a)).